The primary structure comprises 350 residues: tRNA dimethylallyltransferase (350 aa).

Positions 1-20 (MMNTERPAGPLRPPHPPHPP) are disordered. Pro residues predominate over residues 10–20 (PLRPPHPPHPP). Residue 27–34 (GPTASGKT) participates in ATP binding. 29-34 (TASGKT) serves as a coordination point for substrate. Interaction with substrate tRNA regions lie at residues 52-55 (DSAL), 176-180 (QRIAR), and 273-278 (RCVGYR).

Belongs to the IPP transferase family. Monomer. Mg(2+) is required as a cofactor.

The catalysed reaction is adenosine(37) in tRNA + dimethylallyl diphosphate = N(6)-dimethylallyladenosine(37) in tRNA + diphosphate. In terms of biological role, catalyzes the transfer of a dimethylallyl group onto the adenine at position 37 in tRNAs that read codons beginning with uridine, leading to the formation of N6-(dimethylallyl)adenosine (i(6)A). The polypeptide is tRNA dimethylallyltransferase (Albidiferax ferrireducens (strain ATCC BAA-621 / DSM 15236 / T118) (Rhodoferax ferrireducens)).